Reading from the N-terminus, the 98-residue chain is UPF0473 protein LSL_1108 (98 aa).

The protein belongs to the UPF0473 family.

This chain is UPF0473 protein LSL_1108, found in Ligilactobacillus salivarius (strain UCC118) (Lactobacillus salivarius).